Reading from the N-terminus, the 294-residue chain is Pyrroline-5-carboxylate reductase (294 aa).

This sequence belongs to the pyrroline-5-carboxylate reductase family.

The protein localises to the cytoplasm. The enzyme catalyses L-proline + NADP(+) = (S)-1-pyrroline-5-carboxylate + NADPH + 2 H(+). It carries out the reaction L-proline + NAD(+) = (S)-1-pyrroline-5-carboxylate + NADH + 2 H(+). It functions in the pathway amino-acid biosynthesis; L-proline biosynthesis; L-proline from L-glutamate 5-semialdehyde: step 1/1. In terms of biological role, catalyzes the reduction of 1-pyrroline-5-carboxylate (PCA) to L-proline. The protein is Pyrroline-5-carboxylate reductase of Mycobacterium leprae (strain TN).